The sequence spans 262 residues: Sepiapterin reductase (262 aa).

Met-1 is modified (N-acetylmethionine). NADP(+) contacts are provided by residues 15–21 (GASRGFG) and 43–44 (RS). Ser-46 bears the Phosphoserine mark. 70-71 (DL) is a binding site for NADP(+). Substrate is bound by residues 158–159 (SL) and Tyr-171. An NADP(+)-binding site is contributed by Lys-175. Ser-196 is subject to Phosphoserine. Gly-200 serves as a coordination point for substrate. 202–207 (LDTDMQ) contacts NADP(+). Ser-214 is modified (phosphoserine). Residue Asp-258 participates in substrate binding.

Belongs to the sepiapterin reductase family. As to quaternary structure, homodimer.

It localises to the cytoplasm. It catalyses the reaction L-erythro-7,8-dihydrobiopterin + NADP(+) = L-sepiapterin + NADPH + H(+). It carries out the reaction (6R)-L-erythro-5,6,7,8-tetrahydrobiopterin + 2 NADP(+) = 6-pyruvoyl-5,6,7,8-tetrahydropterin + 2 NADPH + 2 H(+). The enzyme catalyses (S)-benzoin + NADP(+) = benzil + NADPH + H(+). In terms of biological role, catalyzes the final one or two reductions in tetra-hydrobiopterin biosynthesis to form 5,6,7,8-tetrahydrobiopterin. The enzyme also catalyzes the reduction of benzil to (S)-benzoin. This is Sepiapterin reductase (SPR) from Meriones unguiculatus (Mongolian jird).